A 300-amino-acid chain; its full sequence is N-acetylmuramic acid 6-phosphate etherase (300 aa).

One can recognise an SIS domain in the interval I57–K220. E85 serves as the catalytic Proton donor. Residue E116 is part of the active site.

The protein belongs to the GCKR-like family. MurNAc-6-P etherase subfamily. Homodimer.

The catalysed reaction is N-acetyl-D-muramate 6-phosphate + H2O = N-acetyl-D-glucosamine 6-phosphate + (R)-lactate. Its pathway is amino-sugar metabolism; 1,6-anhydro-N-acetylmuramate degradation. It functions in the pathway amino-sugar metabolism; N-acetylmuramate degradation. It participates in cell wall biogenesis; peptidoglycan recycling. In terms of biological role, specifically catalyzes the cleavage of the D-lactyl ether substituent of MurNAc 6-phosphate, producing GlcNAc 6-phosphate and D-lactate. Together with AnmK, is also required for the utilization of anhydro-N-acetylmuramic acid (anhMurNAc) either imported from the medium or derived from its own cell wall murein, and thus plays a role in cell wall recycling. This Vibrio vulnificus (strain CMCP6) protein is N-acetylmuramic acid 6-phosphate etherase.